The sequence spans 300 residues: Protein ARMCX6 (300 aa).

At 1 to 6 (MGRARE) the chain is on the mitochondrial intermembrane side. 2 mitochondrion outer membrane (MOM)-targeting sequence regions span residues 1-6 (MGRARE) and 26-36 (KLTIGRDDSEK). A helical; Signal-anchor transmembrane segment spans residues 7–27 (VGWMAAGLMIGAGACYCVYKL). The Cytoplasmic segment spans residues 28–300 (TIGRDDSEKL…REILLETPAP (273 aa)). Disordered stretches follow at residues 35–54 (EKLE…LDEE) and 69–99 (WTED…RAHP).

Belongs to the eutherian X-chromosome-specific Armcx family.

Its subcellular location is the mitochondrion. It localises to the mitochondrion outer membrane. Its function is as follows. May regulate the dynamics and distribution of mitochondria in neural cells. This is Protein ARMCX6 (ARMCX6) from Homo sapiens (Human).